The primary structure comprises 971 residues: Protein ALWAYS EARLY 1 (971 aa).

Over residues M1–N11 the composition is skewed to basic residues. Disordered stretches follow at residues M1 to K40, S117 to K137, I197 to N260, G326 to D371, and P421 to L507. An SANT domain is found at K40 to A98. 3 stretches are compositionally biased toward basic and acidic residues: residues K209–R219, S332–N350, and S424–S440. Residues S450–A470 are compositionally biased toward polar residues.

As to expression, expressed ubiquitously in vegetative and reproductive tissues.

It localises to the nucleus. This is Protein ALWAYS EARLY 1 (ALY1) from Arabidopsis thaliana (Mouse-ear cress).